Consider the following 92-residue polypeptide: Cell division protein FtsB (92 aa).

Topologically, residues 1–3 are cytoplasmic; sequence MRL. Residues 4-21 traverse the membrane as a helical segment; that stretch reads LILILLSVLVLFQYNFWF. Residues 22-92 are Periplasmic-facing; sequence GSNGFLDYRQ…VFYHIVKESK (71 aa). Residues 28-63 are a coiled coil; it reads DYRQNAEKIKENQAENEKLSQRNQRINAEIQGLTKG.

This sequence belongs to the FtsB family. In terms of assembly, part of a complex composed of FtsB, FtsL and FtsQ.

Its subcellular location is the cell inner membrane. Functionally, essential cell division protein. May link together the upstream cell division proteins, which are predominantly cytoplasmic, with the downstream cell division proteins, which are predominantly periplasmic. This Haemophilus influenzae (strain 86-028NP) protein is Cell division protein FtsB.